The primary structure comprises 153 residues: MLSQLPLFAGGEIVRGFGRGSKELGIPTANFPLEVVKSLPESLPTGAYYGWANVDNGPVHKMVLSIGWNPFYNNKEKSVETHMLHDFNCDLYGQTLKICIVGYLRPERSFDSLESLIAAIRGDIEQAKAFLDEADKAKLKEAPFFTEKLCSSK.

Positions 28 and 30 each coordinate Mg(2+). Glu80 (nucleophile) is an active-site residue.

In terms of assembly, monomer. Zn(2+) serves as cofactor. Mg(2+) is required as a cofactor.

The protein localises to the cytoplasm. The enzyme catalyses riboflavin + ATP = FMN + ADP + H(+). It participates in cofactor biosynthesis; FMN biosynthesis; FMN from riboflavin (ATP route): step 1/1. Catalyzes the phosphorylation of riboflavin (vitamin B2) to form flavin-mononucleotide (FMN). The chain is Putative riboflavin kinase from Drosophila melanogaster (Fruit fly).